The sequence spans 304 residues: Quinolinate synthase (304 aa).

Residues histidine 24 and serine 41 each coordinate iminosuccinate. Cysteine 86 serves as a coordination point for [4Fe-4S] cluster. Iminosuccinate is bound by residues 112–114 (YVN) and serine 129. Cysteine 171 lines the [4Fe-4S] cluster pocket. Iminosuccinate contacts are provided by residues 197 to 199 (HPE) and threonine 214. [4Fe-4S] cluster is bound at residue cysteine 259.

This sequence belongs to the quinolinate synthase family. Type 2 subfamily. [4Fe-4S] cluster serves as cofactor.

The protein localises to the cytoplasm. The enzyme catalyses iminosuccinate + dihydroxyacetone phosphate = quinolinate + phosphate + 2 H2O + H(+). It functions in the pathway cofactor biosynthesis; NAD(+) biosynthesis; quinolinate from iminoaspartate: step 1/1. Its function is as follows. Catalyzes the condensation of iminoaspartate with dihydroxyacetone phosphate to form quinolinate. In Geotalea uraniireducens (strain Rf4) (Geobacter uraniireducens), this protein is Quinolinate synthase.